Consider the following 116-residue polypeptide: NADH-ubiquinone oxidoreductase chain 3 (116 aa).

The next 3 membrane-spanning stretches (helical) occupy residues 4 to 24, 56 to 76, and 88 to 108; these read LIIT…IAFW, FFLI…LLPL, and TLIL…YEWI.

It belongs to the complex I subunit 3 family. Core subunit of respiratory chain NADH dehydrogenase (Complex I) which is composed of 45 different subunits. Interacts with TMEM186. Interacts with TMEM242.

The protein resides in the mitochondrion inner membrane. It catalyses the reaction a ubiquinone + NADH + 5 H(+)(in) = a ubiquinol + NAD(+) + 4 H(+)(out). Functionally, core subunit of the mitochondrial membrane respiratory chain NADH dehydrogenase (Complex I) which catalyzes electron transfer from NADH through the respiratory chain, using ubiquinone as an electron acceptor. Essential for the catalytic activity of complex I. The protein is NADH-ubiquinone oxidoreductase chain 3 of Osphranter robustus (Wallaroo).